We begin with the raw amino-acid sequence, 291 residues long: 2-C-methyl-D-erythritol 4-phosphate cytidylyltransferase (291 aa).

The tract at residues 1 to 23 (MTERDFDTPVETPTVQPAPAQGA) is disordered.

This sequence belongs to the IspD/TarI cytidylyltransferase family. IspD subfamily.

It catalyses the reaction 2-C-methyl-D-erythritol 4-phosphate + CTP + H(+) = 4-CDP-2-C-methyl-D-erythritol + diphosphate. Its pathway is isoprenoid biosynthesis; isopentenyl diphosphate biosynthesis via DXP pathway; isopentenyl diphosphate from 1-deoxy-D-xylulose 5-phosphate: step 2/6. In terms of biological role, catalyzes the formation of 4-diphosphocytidyl-2-C-methyl-D-erythritol from CTP and 2-C-methyl-D-erythritol 4-phosphate (MEP). This chain is 2-C-methyl-D-erythritol 4-phosphate cytidylyltransferase, found in Bifidobacterium longum (strain DJO10A).